The sequence spans 430 residues: MKASVFKSLYFQVLTAITLGVLLGHFYPELGAQMKPLGDGFVKLIKMIIAPVIFCTVVTGIAGMESMKAVGRTGAIALLYFEIVSTIALLIGLVIVNVVQPGAGMNIDPATLDAKAVALYAEQASQQGIIPFLLDIIPGSVVGAFASGNILQVLLFAVLFGFALHRLGEKGQLIFNVIESFSRVIFGIINMIMRLAPIGAFGAMAFTIGKYGVGSLVQLGQLIICFYITCVLFVVVVLGSIAKFNGFNIFKFIRYIKEELLIVLGTSSSESVLPRMLDKMEKAGCKKSVVGLVIPTGYSFNLDGTSIYLTMAAVFIAQATNTHMDVIHQVTLLVVLLLSSKGAAGVTGSGFIVLAATISAVGHLPLAGLALILGIDRFMSEARALTNLVGNGVATIVVAKWCNQLDNDQLQAVLSNKTLPNNEIKSSTSA.

9 helical membrane passes run 8–28 (SLYFQVLTAITLGVLLGHFYP), 44–64 (LIKMIIAPVIFCTVVTGIAGM), 76–96 (IALLYFEIVSTIALLIGLVIV), 144–164 (AFASGNILQVLLFAVLFGFAL), 184–204 (VIFGIINMIMRLAPIGAFGAM), 222–242 (LIICFYITCVLFVVVVLGSIA), 289–309 (VVGLVIPTGYSFNLDGTSIYL), 326–346 (VIHQVTLLVVLLLSSKGAAGV), and 352–372 (IVLAATISAVGHLPLAGLALI).

The protein belongs to the dicarboxylate/amino acid:cation symporter (DAACS) (TC 2.A.23) family.

Its subcellular location is the cell inner membrane. In terms of biological role, responsible for the transport of dicarboxylates such as succinate, fumarate, and malate from the periplasm across the membrane. This chain is C4-dicarboxylate transport protein, found in Yersinia enterocolitica serotype O:8 / biotype 1B (strain NCTC 13174 / 8081).